Reading from the N-terminus, the 543-residue chain is Zinc finger protein 852 (543 aa).

The region spanning 8-82 (VAYEDLSEDY…TSGGLFGVVP (75 aa)) is the KRAB domain. Phosphoserine is present on S145. 12 consecutive C2H2-type zinc fingers follow at residues 159 to 181 (YRCD…RRIH), 187 to 209 (YECN…LRTH), 215 to 237 (YECS…QRLH), 243 to 265 (YKCN…QRTH), 271 to 293 (YECK…QFLH), 299 to 321 (YKCN…QRTH), 327 to 349 (YKCN…QSLH), 355 to 377 (YKCS…ERIH), 383 to 405 (FKCS…QRLH), 411 to 433 (YKCN…QRIH), 439 to 461 (YECN…QRTH), and 467 to 489 (YKCN…QRVH).

It belongs to the krueppel C2H2-type zinc-finger protein family.

It localises to the nucleus. In terms of biological role, may be involved in transcriptional regulation. The polypeptide is Zinc finger protein 852 (ZNF852) (Homo sapiens (Human)).